A 275-amino-acid chain; its full sequence is Elongation factor Ts (275 aa).

Residues 76 to 79 (TDFV) form an involved in Mg(2+) ion dislocation from EF-Tu region.

Belongs to the EF-Ts family.

The protein localises to the cytoplasm. Its function is as follows. Associates with the EF-Tu.GDP complex and induces the exchange of GDP to GTP. It remains bound to the aminoacyl-tRNA.EF-Tu.GTP complex up to the GTP hydrolysis stage on the ribosome. This Salinispora tropica (strain ATCC BAA-916 / DSM 44818 / JCM 13857 / NBRC 105044 / CNB-440) protein is Elongation factor Ts.